Here is a 429-residue protein sequence, read N- to C-terminus: MYQSPRRLCSALLLRDAPGLRRTLVPGPRRTLAPPVLGSRPKSPQLQAAAASGAARSRPRTVSSMGNGTSRLYSALAKTVNSSAAAQHPEYLVSTDPEHLEPIDPKELLEECRAVLHTRPPRYQRDFVDLRTDCSSSHSPIRVMQWNILAQALGEGKDNFVQCPVEALKWEERKCLILEEILAYQPDILCLQEVDHYFDTFQPLLSRLGYQGTFFPKPWSPCLDVEHNNGPDGCALFFLQNRFKLISSTNIRLTAMTLKTNQVAIAQTLECKESGRQFCIAVTHLKARTGWERFRSAQGCDLLQNLQNITQGAKIPLIVCGDFNAEPTEEVYKHFASSSLNLNSAYKLLSPDGQSEPPYTTWKIRTSGECRHTLDYIWYSRHALSVTSALDLLTEEQIGPNRLPSFHYPSDHLSLVCDFSFNEEPHELF.

The transit peptide at 1–73 directs the protein to the mitochondrion; it reads MYQSPRRLCS…SMGNGTSRLY (73 aa). The disordered stretch occupies residues 21 to 68; sequence RRTLVPGPRRTLAPPVLGSRPKSPQLQAAAASGAARSRPRTVSSMGNG. Glutamate 193 provides a ligand contact to Mg(2+). Substrate-binding positions include glutamate 193, 217 to 219, asparagine 261, 284 to 287, and 322 to 324; these read KPW, HLKA, and DFN. Residues 341–351 form an interaction with PPARG region; sequence NLNSAYKLLSP. Histidine 412 contacts substrate.

The protein belongs to the CCR4/nocturin family. As to quaternary structure, interacts with PPARG. Mg(2+) is required as a cofactor. Highly expressed in the differentiated adipocyte (at protein level). Ubiquitous.

Its subcellular location is the cytoplasm. The protein resides in the nucleus. It localises to the perinuclear region. The protein localises to the mitochondrion. It catalyses the reaction NADP(+) + H2O = phosphate + NAD(+). The enzyme catalyses NADPH + H2O = phosphate + NADH. In terms of biological role, phosphatase which catalyzes the conversion of NADP(+) to NAD(+) and of NADPH to NADH. Shows a small preference for NADPH over NADP(+). Represses translation and promotes degradation of target mRNA molecules. Plays an important role in post-transcriptional regulation of metabolic genes under circadian control. Exerts a rhythmic post-transcriptional control of genes necessary for metabolic functions including nutrient absorption, glucose/insulin sensitivity, lipid metabolism, adipogenesis, inflammation and osteogenesis. Plays an important role in favoring adipogenesis over osteoblastogenesis and acts as a key regulator of the adipogenesis/osteogenesis balance. Promotes adipogenesis by facilitating PPARG nuclear translocation which activates its transcriptional activity. Regulates circadian expression of NOS2 in the liver and negatively regulates the circadian expression of IGF1 in the bone. Critical for proper development of early embryos. The sequence is that of Nocturnin from Mus musculus (Mouse).